A 282-amino-acid chain; its full sequence is ATP synthase gamma chain (282 aa).

The protein belongs to the ATPase gamma chain family. In terms of assembly, F-type ATPases have 2 components, CF(1) - the catalytic core - and CF(0) - the membrane proton channel. CF(1) has five subunits: alpha(3), beta(3), gamma(1), delta(1), epsilon(1). CF(0) has three main subunits: a, b and c.

It localises to the cell membrane. In terms of biological role, produces ATP from ADP in the presence of a proton gradient across the membrane. The gamma chain is believed to be important in regulating ATPase activity and the flow of protons through the CF(0) complex. The sequence is that of ATP synthase gamma chain from Clostridium botulinum (strain Kyoto / Type A2).